A 409-amino-acid chain; its full sequence is N-carbamoyl-L-amino acid amidohydrolase (409 aa).

His79, Asp90, Glu125, and His189 together coordinate a divalent metal cation. 5 residues coordinate an N-carbamoyl-L-alpha-amino acid: Gln192, His225, Asn273, Arg286, and Ala355. Residues 208 to 325 (GIAGLIWVKF…TTERLQEMAP (118 aa)) form an involved in dimerization region. His380 is an a divalent metal cation binding site.

The protein belongs to the peptidase M20 family. As to quaternary structure, homodimer. It depends on Mn(2+) as a cofactor. Ni(2+) serves as cofactor. Co(2+) is required as a cofactor. Requires Fe(2+) as cofactor.

The enzyme catalyses an N-carbamoyl-L-alpha-amino acid + H2O + 2 H(+) = an L-alpha-amino acid + NH4(+) + CO2. It carries out the reaction N-carbamoyl-L-methionine + H2O + 2 H(+) = L-methionine + NH4(+) + CO2. The catalysed reaction is N-acetyl-L-methionine + H2O = L-methionine + acetate. It catalyses the reaction N-carbamoyl-L-alanine + H2O + 2 H(+) = L-alanine + NH4(+) + CO2. The enzyme catalyses N-carbamoyl-L-glutamate + H2O + 2 H(+) = L-glutamate + NH4(+) + CO2. It carries out the reaction N-carbamoylglycine + H2O + 2 H(+) = glycine + NH4(+) + CO2. The catalysed reaction is N-carbamoyl-L-leucine + H2O + 2 H(+) = L-leucine + NH4(+) + CO2. Its function is as follows. Catalyzes the hydrolysis of aliphatic N-carbamoyl-L-alpha-amino acids to free L-alpha-amino acids. Is strictly L-specific since it is inactive toward N-carbamoyl-D-alpha-amino acids. Is not able to use aromatic N-carbamoyl-L-alpha-amino acids like N-carbamoyl-L-tryptophan and N-carbamoyl-L-phenylalanine as substrates, but is also able to hydrolyze N-acetyl-L-methionine. This chain is N-carbamoyl-L-amino acid amidohydrolase, found in Geobacillus stearothermophilus (Bacillus stearothermophilus).